Reading from the N-terminus, the 215-residue chain is Ribosomal RNA small subunit methyltransferase G (215 aa).

S-adenosyl-L-methionine contacts are provided by residues Gly-77, Phe-82, 130–131 (IE), and Arg-146.

The protein belongs to the methyltransferase superfamily. RNA methyltransferase RsmG family.

It localises to the cytoplasm. The catalysed reaction is guanosine(527) in 16S rRNA + S-adenosyl-L-methionine = N(7)-methylguanosine(527) in 16S rRNA + S-adenosyl-L-homocysteine. In terms of biological role, specifically methylates the N7 position of guanine in position 527 of 16S rRNA. This chain is Ribosomal RNA small subunit methyltransferase G, found in Bartonella quintana (strain Toulouse) (Rochalimaea quintana).